Consider the following 856-residue polypeptide: Putative zinc protease C28F5.4 (856 aa).

H71 is a Zn(2+) binding site. The active-site Proton acceptor is the E74. Residues H75 and E152 each coordinate Zn(2+).

The protein belongs to the peptidase M16 family.

This chain is Putative zinc protease C28F5.4, found in Caenorhabditis elegans.